We begin with the raw amino-acid sequence, 464 residues long: Serine/threonine-protein kinase 38-like (464 aa).

Residue Ala2 is modified to N-acetylalanine. The tract at residues 64-89 (KLRRSQHARKETEFLRLKRTRLGLDD) is S100B binding. Thr75 is modified (phosphothreonine). One can recognise a Protein kinase domain in the interval 90 to 383 (FESLKVIGRG…VEEIKGHPFF (294 aa)). ATP is bound by residues 96–104 (IGRGAFGEV) and Lys119. Asp213 serves as the catalytic Proton acceptor. Ser282 is subject to Phosphoserine; by autocatalysis. Residues 384-453 (EGVDWGHIRE…KRFEGLTQRG (70 aa)) enclose the AGC-kinase C-terminal domain. Residue Thr442 is modified to Phosphothreonine; by STK24/MST3.

The protein belongs to the protein kinase superfamily. AGC Ser/Thr protein kinase family. Homodimeric S100B binds two molecules of STK38L. Interacts with MOB1 and MOB2. Interacts with MICAL1; leading to inhibit the protein kinase activity by antagonizing activation by MST1/STK4. Requires Mg(2+) as cofactor. As to expression, highly expressed in the large and small intestine, stomach and testis. High levels also present in the brain, in particular the neurocortex, basal forebrain, hippocampus, the amygdala, cerebellum and brainstem.

It localises to the cytoplasm. The protein resides in the cytoskeleton. It is found in the membrane. The catalysed reaction is L-seryl-[protein] + ATP = O-phospho-L-seryl-[protein] + ADP + H(+). It carries out the reaction L-threonyl-[protein] + ATP = O-phospho-L-threonyl-[protein] + ADP + H(+). With respect to regulation, activated by binding of S100B which releases autoinhibitory N-lobe interactions, enabling ATP to bind and the autophosphorylation of Ser-282. Thr-442 then undergoes calcium-dependent phosphorylation by STK24/MST3. Interactions between phosphorylated Thr-442 and the N-lobe promote additional structural changes that complete the activation of the kinase. Autoinhibition is also released by the binding of MOB1/MOBKL1A and MOB2 to the N-terminal of STK38L. In terms of biological role, involved in the regulation of structural processes in differentiating and mature neuronal cells. The chain is Serine/threonine-protein kinase 38-like from Mus musculus (Mouse).